An 83-amino-acid polypeptide reads, in one-letter code: BmKBT-like peptide (83 aa).

The first 19 residues, 1 to 19, serve as a signal peptide directing secretion; that stretch reads MKAALLLVISTLMLIGVLT. Residues 21–81 form the LCN-type CS-alpha/beta domain; the sequence is KSGYPIQHDG…TWSRETNKCR (61 aa). Cystine bridges form between C31/C80, C35/C54, C41/C61, and C45/C63. A propeptide (removed by a carboxypeptidase) is located at residue K83.

Belongs to the long (4 C-C) scorpion toxin superfamily. Sodium channel inhibitor family. Beta subfamily. As to expression, expressed by the venom gland.

It localises to the secreted. Its function is as follows. Sodium channel inhibitor. Possesses potent toxicity in mice but induces only paralysis in cotton bollworm. The sequence is that of BmKBT-like peptide from Olivierus martensii (Manchurian scorpion).